The following is a 285-amino-acid chain: Transcription factor LBX1 (285 aa).

Over residues Met-1–Leu-20 the composition is skewed to basic and acidic residues. The segment at Met-1–Phe-36 is disordered. The segment at residues Arg-125–Leu-184 is a DNA-binding region (homeobox). A disordered region spans residues Glu-212–Asp-285. The span at Ser-218 to Gly-230 shows a compositional bias: gly residues. The span at Cys-272–Asp-285 shows a compositional bias: acidic residues.

In terms of assembly, interacts with SKOR1 which acts as a transcriptional corepressor.

The protein resides in the nucleus. Functionally, transcription factor required for the development of GABAergic interneurons in the dorsal horn of the spinal cord and migration and further development of hypaxial muscle precursor cells for limb muscles, diaphragm and hypoglossal cord. The chain is Transcription factor LBX1 from Rattus norvegicus (Rat).